Consider the following 370-residue polypeptide: Histidinol-phosphate aminotransferase 1 (370 aa).

N6-(pyridoxal phosphate)lysine is present on Lys-222.

Belongs to the class-II pyridoxal-phosphate-dependent aminotransferase family. Histidinol-phosphate aminotransferase subfamily. Homodimer. Pyridoxal 5'-phosphate serves as cofactor.

It catalyses the reaction L-histidinol phosphate + 2-oxoglutarate = 3-(imidazol-4-yl)-2-oxopropyl phosphate + L-glutamate. Its pathway is amino-acid biosynthesis; L-histidine biosynthesis; L-histidine from 5-phospho-alpha-D-ribose 1-diphosphate: step 7/9. The chain is Histidinol-phosphate aminotransferase 1 from Bacillus thuringiensis subsp. konkukian (strain 97-27).